The primary structure comprises 154 residues: 6,7-dimethyl-8-ribityllumazine synthase (154 aa).

5-amino-6-(D-ribitylamino)uracil is bound by residues phenylalanine 22, 57 to 59 (AYE), and 81 to 83 (AVI). 86–87 (GT) is a binding site for (2S)-2-hydroxy-3-oxobutyl phosphate. The active-site Proton donor is histidine 89. Phenylalanine 114 is a 5-amino-6-(D-ribitylamino)uracil binding site. Arginine 128 is a binding site for (2S)-2-hydroxy-3-oxobutyl phosphate.

The protein belongs to the DMRL synthase family. As to quaternary structure, forms an icosahedral capsid composed of 60 subunits, arranged as a dodecamer of pentamers.

It carries out the reaction (2S)-2-hydroxy-3-oxobutyl phosphate + 5-amino-6-(D-ribitylamino)uracil = 6,7-dimethyl-8-(1-D-ribityl)lumazine + phosphate + 2 H2O + H(+). The protein operates within cofactor biosynthesis; riboflavin biosynthesis; riboflavin from 2-hydroxy-3-oxobutyl phosphate and 5-amino-6-(D-ribitylamino)uracil: step 1/2. Catalyzes the formation of 6,7-dimethyl-8-ribityllumazine by condensation of 5-amino-6-(D-ribitylamino)uracil with 3,4-dihydroxy-2-butanone 4-phosphate. This is the penultimate step in the biosynthesis of riboflavin. This Idiomarina loihiensis (strain ATCC BAA-735 / DSM 15497 / L2-TR) protein is 6,7-dimethyl-8-ribityllumazine synthase.